A 123-amino-acid chain; its full sequence is Small ribosomal subunit protein uS12cz/uS12cy (123 aa).

Belongs to the universal ribosomal protein uS12 family. Part of the 30S ribosomal subunit.

The protein resides in the plastid. It is found in the chloroplast. With S4 and S5 plays an important role in translational accuracy. Located at the interface of the 30S and 50S subunits. In Coffea arabica (Arabian coffee), this protein is Small ribosomal subunit protein uS12cz/uS12cy (rps12-A).